Reading from the N-terminus, the 485-residue chain is Endo-1,4-beta-xylanase C (485 aa).

The N-terminal stretch at 1 to 19 (MKFLQIIPVLLSLTSTTLA) is a signal peptide. The GH11 domain occupies 34 to 234 (KETGNKVGTI…GNGGVSGTAD (201 aa)). 2 N-linked (GlcNAc...) asparagine glycosylation sites follow: Asn-56 and Asn-107. The active-site Nucleophile is Glu-128. N-linked (GlcNAc...) asparagine glycosylation occurs at Asn-175. Catalysis depends on Glu-221, which acts as the Proton donor. Residues 250–450 (ASPAPAGGAP…PQNASDGGNC (201 aa)) form a disordered region. Composition is skewed to low complexity over residues 265–330 (AGND…QGQH) and 344–354 (GSDFNNWSQGG). 7 repeat units span residues 275 to 280 (GQQPPQ), 281 to 286 (GQQPPQ), 287 to 292 (GQQPPQ), 293 to 298 (GQQPPQ), 299 to 304 (GQQPPQ), 310 to 315 (GQQPPQ), and 316 to 321 (GQQPPQ). The segment at 275–321 (GQQPPQGQQPPQGQQPPQGQQPPQGQQPPQGNDQQGQQPPQGQQPPQ) is 7 X 6 AA tandem repeats of G-Q-Q-P-P-Q. Asn-349 carries N-linked (GlcNAc...) asparagine glycosylation. Tandem repeats lie at residues 353 to 361 (GGSPWGGNQ), 362 to 370 (GGSPWGGNQ), 371 to 379 (GGNPWGGNQ), 380 to 388 (GGSPWGGNQ), 389 to 397 (GGSPWGQGN), 399 to 407 (GGNPWGGNQ), 408 to 416 (GGSPWGGNQ), and 417 to 425 (GGNPWGGNQ). The 8 X 9 AA tandem repeats of G-G-[SN]-P-W-G-G-N-Q stretch occupies residues 353–425 (GGSPWGGNQG…QGGNPWGGNQ (73 aa)). The segment covering 355 to 425 (SPWGGNQGGS…QGGNPWGGNQ (71 aa)) has biased composition (gly residues). The span at 426–445 (WGAPQNAAAPQSAAAPQNAS) shows a compositional bias: low complexity. Residue Asn-443 is glycosylated (N-linked (GlcNAc...) asparagine). Residues 449–484 (NCASLWGQCGGQGYNGPSCCSEGSCKPINEYFHQCQ) enclose the CBM1 domain.

The protein belongs to the glycosyl hydrolase 11 (cellulase G) family.

The protein resides in the secreted. The enzyme catalyses Endohydrolysis of (1-&gt;4)-beta-D-xylosidic linkages in xylans.. Its pathway is glycan degradation; xylan degradation. Functionally, endo-1,4-beta-xylanase involved in the hydrolysis of xylan, a major structural heterogeneous polysaccharide found in plant biomass representing the second most abundant polysaccharide in the biosphere, after cellulose. In Neocallimastix patriciarum (Rumen fungus), this protein is Endo-1,4-beta-xylanase C (xynC).